The primary structure comprises 122 residues: Double-headed protease inhibitor, submandibular gland (122 aa).

Kazal-like domains are found at residues 10-70 (GGRK…ECDI) and 71-121 (ECTQ…QCQS). 6 disulfides stabilise this stretch: C16–C50, C28–C47, C36–C68, C72–C101, C79–C98, and C87–C119.

The protein resides in the secreted. In terms of biological role, this inhibitor is composed of two homologous actively inhibiting halves: one which inhibits trypsin, the other which inhibits elastase. The protein is Double-headed protease inhibitor, submandibular gland of Panthera uncia (Snow leopard).